A 237-amino-acid polypeptide reads, in one-letter code: Ribosomal RNA small subunit methyltransferase G (237 aa).

S-adenosyl-L-methionine is bound by residues Gly76, Phe81, 128-129, and Arg147; that span reads IE.

It belongs to the methyltransferase superfamily. RNA methyltransferase RsmG family.

The protein localises to the cytoplasm. Specifically methylates the N7 position of a guanine in 16S rRNA. The chain is Ribosomal RNA small subunit methyltransferase G from Prochlorococcus marinus (strain MIT 9301).